A 161-amino-acid chain; its full sequence is Nucleotide-binding protein Bphy_0527 (161 aa).

This sequence belongs to the YajQ family.

Nucleotide-binding protein. This chain is Nucleotide-binding protein Bphy_0527, found in Paraburkholderia phymatum (strain DSM 17167 / CIP 108236 / LMG 21445 / STM815) (Burkholderia phymatum).